The primary structure comprises 552 residues: MNEASERPNHFIRHIIEEDLAQGKHSFIRTRFPPEPNGYLHIGHAKSICLNFGLAQDYQGECHLRFDDTNPEKEEQEYIESIKRDVQWLGFAWSGAVRYSSDYFESLYGYAIELIQKELAYVDELNAEQMREYRGTLTAPGKNSPFRDRTVEDNIELFKKMRAGGFAEGAACLRAKIDMASPFMIMRDPVLYRIKFAEHHQLGDQWCIYPMYDFTHCISDALEGITHSLCTLEFQDNRRLYDWVLENISIDCHPRQYEFSRLNLEHTLMSKRKLHLLVKEKKVTGWDDPRMPTLSGLKRRGYTPASIREFCHRIGVTKQDNQVEMSALEACIREDLNQNAPRALAVLDPVQLIIDNRSDEKEWLTVPNHPNNPGMGHRQMPFNRVLYIDRADFREEANKKYKRLVLGKEVRLRHAYVVKAKYVEKNAQGMITAIHCEYDPETLNKDPSDGRKIRGVIHWVSADDAVPAEIRLYHHLLTASHADTCLFLEAFNPESLFIRQGFVEPSLANTQEGKTYQFEREGYFCTDKDSSEKHLVFNRTVSLRGESALYDL.

The 'HIGH' region signature appears at 34–44 (PEPNGYLHIGH). Residues 35-37 (EPN) and 41-47 (HIGHAKS) contribute to the ATP site. L-glutamine is bound by residues D67 and Y212. Residues T231, 261 to 262 (RL), and 269 to 271 (MSK) each bind ATP. Residues 268-272 (LMSKR) carry the 'KMSKS' region motif.

Belongs to the class-I aminoacyl-tRNA synthetase family. In terms of assembly, monomer.

It is found in the cytoplasm. It catalyses the reaction tRNA(Gln) + L-glutamine + ATP = L-glutaminyl-tRNA(Gln) + AMP + diphosphate. This is Glutamine--tRNA ligase from Hamiltonella defensa subsp. Acyrthosiphon pisum (strain 5AT).